The following is a 361-amino-acid chain: Phospho-N-acetylmuramoyl-pentapeptide-transferase (361 aa).

Helical transmembrane passes span 28 to 48 (LAALTALSISFLIGPAMIRSL), 73 to 93 (TMGGALILMAVIITTLLWADL), 97 to 117 (YIWLVLLTTLGFGAIGWVDDY), 134 to 154 (FFWQSIIALLVAVYLAMTAEL), 168 to 188 (VAIPLGSFLFIILTYLVIVGS), 200 to 220 (GLAIMPTVMISGALAIFAYVA), 237 to 257 (AGELAVFCGALAGAGLAFLWF), 264 to 284 (VFMGDVGALALGAALGVITVI), 289 to 309 (IVLVIMGGVFVMEALSVMIQV), and 338 to 358 (QVVVRFWIITIILVLIGLSTL).

The protein belongs to the glycosyltransferase 4 family. MraY subfamily. The cofactor is Mg(2+).

It localises to the cell inner membrane. It catalyses the reaction UDP-N-acetyl-alpha-D-muramoyl-L-alanyl-gamma-D-glutamyl-meso-2,6-diaminopimeloyl-D-alanyl-D-alanine + di-trans,octa-cis-undecaprenyl phosphate = di-trans,octa-cis-undecaprenyl diphospho-N-acetyl-alpha-D-muramoyl-L-alanyl-D-glutamyl-meso-2,6-diaminopimeloyl-D-alanyl-D-alanine + UMP. It participates in cell wall biogenesis; peptidoglycan biosynthesis. In terms of biological role, catalyzes the initial step of the lipid cycle reactions in the biosynthesis of the cell wall peptidoglycan: transfers peptidoglycan precursor phospho-MurNAc-pentapeptide from UDP-MurNAc-pentapeptide onto the lipid carrier undecaprenyl phosphate, yielding undecaprenyl-pyrophosphoryl-MurNAc-pentapeptide, known as lipid I. The chain is Phospho-N-acetylmuramoyl-pentapeptide-transferase from Nitrosomonas eutropha (strain DSM 101675 / C91 / Nm57).